Reading from the N-terminus, the 762-residue chain is MGNGSVKPKHSKHPDGQSGNLSNEALRSKVAELEREVKRKDAELQEREYHLKELREQLAKQTVAIAELTEELQSKCIQLNKLQDVIHVQGGSPLQASPDKVPLDVHRKTSGLVSLHSRRGAKAGVSAEPTSRTYDLNKPPEFSFEKARVRKDSSEKKLITDALNKNQFLKRLDPQQIKDMVECMYGRNYQQGSYIVKQGEPGNHIFVLAEGRLEVFQGEKLLSSIPMWTTFGELAILYNCTRTASVKAITNVKTWALDREVFQNIMRRTAQARDEEYRNFLRSVSLLKNLPEDKLTKIIDCLEVEYYDKGDYIIREGEEGSTFFILAKGKVKVTQSTEGHDQPQLIKTLQKGEYFGEKALISDDVRSANIIAEENDVACLVIDRETFNQTVGTFDELQKYLEGYVATLNRDDEKRHAKRSMSSWKLSKALSLEMIQLKEKVARFSSTSPFQNLEIIATLGVGGFGRVELVKVKNENIAFAMKCIRKKHIVDTKQQEHVYSEKRILEELCSPFIVKLYRTFKDNKYVYMLLEACLGGELWSILRDRGSFDEPTSKFCVACVTEAFDYLHRLGIIYRDLKPENLILDADGYLKLVDFGFAKKIGSGQKTWTFCGTPEYVAPEVILNKGHDFSVDFWSLGILVYELLTGNPPFSGIDQMMTYNLILKGIEKMDFPRKITRRPEDLIRRLCRQNPTERLGNLKNGINDIKKHRWLNGFNWEGLKARSLPSPLRRELSGPIDHSYFDKYPPEKGVPPDEMSGWDKDF.

Positions 1-25 (MGNGSVKPKHSKHPDGQSGNLSNEA) are disordered. A lipid anchor (N-myristoyl glycine) is attached at Gly-2. A phosphoserine mark is found at Ser-110 and Ser-117. The segment at 112–138 (LVSLHSRRGAKAGVSAEPTSRTYDLNK) is disordered. The segment at 168–283 (FLKRLDPQQI…DEEYRNFLRS (116 aa)) is cGMP-binding, high affinity; cAMP-binding, moderate affinity. Residues 232–235 (GELA), 242–243 (RT), Lys-347, 356–359 (GEKA), 366–367 (RS), Asp-412, and Arg-415 each bind 3',5'-cyclic GMP. The interval 286-416 (LLKNLPEDKL…TLNRDDEKRH (131 aa)) is cGMP-binding, high affinity; cAMP-binding, low affinity. Ser-431 carries the phosphoserine modification. The region spanning 453–711 (LEIIATLGVG…INDIKKHRWL (259 aa)) is the Protein kinase domain. ATP contacts are provided by residues 459–467 (LGVGGFGRV) and Lys-482. Residue Asp-576 is the Proton acceptor of the active site. At Thr-609 the chain carries Phosphothreonine. An AGC-kinase C-terminal domain is found at 712–762 (NGFNWEGLKARSLPSPLRRELSGPIDHSYFDKYPPEKGVPPDEMSGWDKDF). The tract at residues 740–762 (YFDKYPPEKGVPPDEMSGWDKDF) is disordered.

Belongs to the protein kinase superfamily. AGC Ser/Thr protein kinase family. cGMP subfamily. Interacts with GRIA1/GLUR1. Myristoylation mediates membrane localization. In terms of tissue distribution, highly expressed in intestinal mucosa and is 20 times less abundant in brain and kidney. Expressed in jejunum, in the apical domain of the villus epithelium.

Its subcellular location is the apical cell membrane. It is found in the cell membrane. The catalysed reaction is L-seryl-[protein] + ATP = O-phospho-L-seryl-[protein] + ADP + H(+). It carries out the reaction L-threonyl-[protein] + ATP = O-phospho-L-threonyl-[protein] + ADP + H(+). With respect to regulation, binding of cGMP results in enzyme activation. Crucial regulator of intestinal secretion and bone growth. Phosphorylates and activates CFTR on the plasma membrane. Plays a key role in intestinal secretion by regulating cGMP-dependent translocation of CFTR in jejunum. Acts downstream of NMDAR to activate the plasma membrane accumulation of GRIA1/GLUR1 in synapse and increase synaptic plasticity. Phosphorylates GRIA1/GLUR1 at Ser-863. Acts as regulator of gene expression and activator of the extracellular signal-regulated kinases MAPK3/ERK1 and MAPK1/ERK2 in mechanically stimulated osteoblasts. Under fluid shear stress, mediates ERK activation and subsequent induction of FOS, FOSL1/FRA1, FOSL2/FRA2 and FOSB that play a key role in the osteoblast anabolic response to mechanical stimulation. In Rattus norvegicus (Rat), this protein is cGMP-dependent protein kinase 2 (Prkg2).